We begin with the raw amino-acid sequence, 401 residues long: Phosphonopyruvate decarboxylase (401 aa).

Residues 382–401 (WPASAVGSGTRAAAGSAGDR) are disordered. Residues 384–401 (ASAVGSGTRAAAGSAGDR) show a composition bias toward low complexity.

Belongs to the TPP enzyme family. Thiamine diphosphate serves as cofactor. The cofactor is Mg(2+).

The catalysed reaction is 3-phosphonopyruvate + H(+) = phosphonoacetaldehyde + CO2. It functions in the pathway secondary metabolite biosynthesis; bialaphos biosynthesis. Involved in the biosynthesis of phosphinothricin tripeptide (PTT), also known as bialaphos (BA), a natural-product antibiotic and potent herbicide. Catalyzes the decarboxylation of phosphonopyruvate (PnPy) to generate phosphonoacetaldehyde (PnAA). The protein is Phosphonopyruvate decarboxylase of Streptomyces hygroscopicus.